A 99-amino-acid chain; its full sequence is RNA-binding protein Hfq (99 aa).

The Sm domain maps to 9–68 (DPFLNALRRERVPVSIYLVNGIKLQGQIESFDQFVILLKNTVSQMVYKHAISTVVPSRPV). The tract at residues 64 to 99 (PSRPVSHHSNNPGGSNNYHGSNTTAQQQSQDADDAE) is disordered. Positions 70–93 (HHSNNPGGSNNYHGSNTTAQQQSQ) are enriched in low complexity.

Belongs to the Hfq family. As to quaternary structure, homohexamer.

RNA chaperone that binds small regulatory RNA (sRNAs) and mRNAs to facilitate mRNA translational regulation in response to envelope stress, environmental stress and changes in metabolite concentrations. Also binds with high specificity to tRNAs. The chain is RNA-binding protein Hfq from Pectobacterium atrosepticum (strain SCRI 1043 / ATCC BAA-672) (Erwinia carotovora subsp. atroseptica).